The sequence spans 289 residues: Diaminopimelate epimerase (289 aa).

The substrate site is built by Asn17, Gln47, and Asn67. Residue Cys76 is the Proton donor of the active site. Residues 77–78 (GN), Asn164, Asn198, and 216–217 (ER) contribute to the substrate site. The active-site Proton acceptor is the Cys225. 226–227 (GS) is a binding site for substrate.

This sequence belongs to the diaminopimelate epimerase family. Homodimer.

Its subcellular location is the cytoplasm. The enzyme catalyses (2S,6S)-2,6-diaminopimelate = meso-2,6-diaminopimelate. It functions in the pathway amino-acid biosynthesis; L-lysine biosynthesis via DAP pathway; DL-2,6-diaminopimelate from LL-2,6-diaminopimelate: step 1/1. Its function is as follows. Catalyzes the stereoinversion of LL-2,6-diaminopimelate (L,L-DAP) to meso-diaminopimelate (meso-DAP), a precursor of L-lysine and an essential component of the bacterial peptidoglycan. This chain is Diaminopimelate epimerase, found in Bradyrhizobium sp. (strain BTAi1 / ATCC BAA-1182).